A 184-amino-acid polypeptide reads, in one-letter code: Guanylate kinase (184 aa).

The Guanylate kinase-like domain occupies 5 to 183; the sequence is KKLIILTGPS…TAKRIIKLIQ (179 aa). 12-19 provides a ligand contact to ATP; sequence GPSGVGKG.

The protein belongs to the guanylate kinase family.

Its subcellular location is the cytoplasm. It catalyses the reaction GMP + ATP = GDP + ADP. Functionally, essential for recycling GMP and indirectly, cGMP. This chain is Guanylate kinase, found in Prochlorococcus marinus (strain MIT 9312).